Here is a 360-residue protein sequence, read N- to C-terminus: Histidinol-phosphate aminotransferase (360 aa).

N6-(pyridoxal phosphate)lysine is present on K218.

It belongs to the class-II pyridoxal-phosphate-dependent aminotransferase family. Histidinol-phosphate aminotransferase subfamily. In terms of assembly, homodimer. It depends on pyridoxal 5'-phosphate as a cofactor.

It carries out the reaction L-histidinol phosphate + 2-oxoglutarate = 3-(imidazol-4-yl)-2-oxopropyl phosphate + L-glutamate. The protein operates within amino-acid biosynthesis; L-histidine biosynthesis; L-histidine from 5-phospho-alpha-D-ribose 1-diphosphate: step 7/9. This is Histidinol-phosphate aminotransferase from Chlorobium phaeovibrioides (strain DSM 265 / 1930) (Prosthecochloris vibrioformis (strain DSM 265)).